The sequence spans 379 residues: Dihydroflavonol 4-reductase (379 aa).

NADP(+)-binding residues include Lys-56 and Tyr-175.

The protein belongs to the NAD(P)-dependent epimerase/dehydratase family. Dihydroflavonol-4-reductase subfamily. In terms of tissue distribution, expressed in both leaf and hypocotyl tissues.

The enzyme catalyses a (2R,3S,4S)-leucoanthocyanidin + NADP(+) = a (2R,3R)-dihydroflavonol + NADPH + H(+). It catalyses the reaction (2S)-flavan-4-ol + NADP(+) = (2S)-flavanone + NADPH + H(+). Its pathway is pigment biosynthesis; anthocyanin biosynthesis. Functionally, bifunctional enzyme involved in flavonoid metabolism. In Solanum lycopersicum (Tomato), this protein is Dihydroflavonol 4-reductase.